The chain runs to 201 residues: ATP-dependent Clp protease proteolytic subunit (201 aa).

S101 acts as the Nucleophile in catalysis. H126 is an active-site residue.

The protein belongs to the peptidase S14 family. As to quaternary structure, component of the chloroplastic Clp protease core complex.

Its subcellular location is the plastid. The protein resides in the chloroplast stroma. The catalysed reaction is Hydrolysis of proteins to small peptides in the presence of ATP and magnesium. alpha-casein is the usual test substrate. In the absence of ATP, only oligopeptides shorter than five residues are hydrolyzed (such as succinyl-Leu-Tyr-|-NHMec, and Leu-Tyr-Leu-|-Tyr-Trp, in which cleavage of the -Tyr-|-Leu- and -Tyr-|-Trp bonds also occurs).. Its function is as follows. Cleaves peptides in various proteins in a process that requires ATP hydrolysis. Has a chymotrypsin-like activity. Plays a major role in the degradation of misfolded proteins. This Chaetosphaeridium globosum (Charophycean green alga) protein is ATP-dependent Clp protease proteolytic subunit.